The chain runs to 718 residues: MNIRLNAKVISTIPVFIAVNIAAVGIWFFDISSQSMPLILGIIAGGLVDLDNRLTGRLKNVFFTLIAFSISSFIVQLHIGKPIQYIVLMTVLTFIFTMIGAVGQRYSTIAFGSLVVALYTTLTYIPEVNVWFINPVMILCGTLLYSVVTLIVYLFFPNRPVQESVAKAFCALGEYLDTKSCFFDPDEVAEIEKKHLNFAMKNANVVTAFNIVRTALFYRIRGQHRHPLTQRMLRYYFAAQDIHERANSTHFDYQQITEKLKNTDLIFRIQRLLELQAQSCKEITASLRENKPYHFNKRVERALLGTLHSFDLYRAQHLNDQDELIDIQTLLDNLQSINWQLRQLAQDTTVTEQLAQIHTEQITGLKNISAVIFSHFTFESPLFRHAVRLSIVVFLCCAIVEFFQFNLGYWILLTTVFVCQPNYSATKVRLRQRIIGTILGVVVGSLLPYLNPTLELKLGLVVLTSTLFFFFRSNNYSFSTFFITLQVLLSFDVMGFDTAAALMPRLLDTLLGAAISWFAVSYLWPDWKYLQLDKVSHQALRSDAVYLLHIISQLQFGKSDDLKYRIARRNAHQYAAALSTTLSNMNNEPVKYKAYLQKGFDLLKLNYSLLSYISALGAYRDRMKNLQQTAQFLSGFYPVAKKIIYTLEHIEEIPEAIFNQQQESIETHLKELEKQEMTAEERAVFSLPYQQLNLITQLLPQFYGYFKKEINCQSAGAL.

6 helical membrane passes run 9 to 29 (VISTIPVFIAVNIAAVGIWFF), 60 to 80 (NVFFTLIAFSISSFIVQLHIG), 83 to 103 (IQYIVLMTVLTFIFTMIGAVG), 136 to 156 (VMILCGTLLYSVVTLIVYLFF), 391 to 411 (IVVFLCCAIVEFFQFNLGYWI), and 506 to 526 (LLDTLLGAAISWFAVSYLWPD).

This sequence belongs to the YccS/YhfK family.

It is found in the cell membrane. This is an uncharacterized protein from Haemophilus influenzae (strain ATCC 51907 / DSM 11121 / KW20 / Rd).